A 110-amino-acid polypeptide reads, in one-letter code: Thiosulfate sulfurtransferase GlpE (110 aa).

Residues 17–105 (KQEGAVVVDI…WRATYPAETA (89 aa)) form the Rhodanese domain. Cys65 functions as the Cysteine persulfide intermediate in the catalytic mechanism.

This sequence belongs to the GlpE family.

Its subcellular location is the cytoplasm. The enzyme catalyses thiosulfate + hydrogen cyanide = thiocyanate + sulfite + 2 H(+). It carries out the reaction thiosulfate + [thioredoxin]-dithiol = [thioredoxin]-disulfide + hydrogen sulfide + sulfite + 2 H(+). Transferase that catalyzes the transfer of sulfur from thiosulfate to thiophilic acceptors such as cyanide or dithiols. May function in a CysM-independent thiosulfate assimilation pathway by catalyzing the conversion of thiosulfate to sulfite, which can then be used for L-cysteine biosynthesis. This Pseudomonas putida (strain GB-1) protein is Thiosulfate sulfurtransferase GlpE.